Here is a 155-residue protein sequence, read N- to C-terminus: Putative pre-16S rRNA nuclease (155 aa).

It belongs to the YqgF nuclease family.

It localises to the cytoplasm. Functionally, could be a nuclease involved in processing of the 5'-end of pre-16S rRNA. This chain is Putative pre-16S rRNA nuclease, found in Xanthomonas oryzae pv. oryzae (strain MAFF 311018).